Here is a 313-residue protein sequence, read N- to C-terminus: Phosphoenolpyruvate phosphomutase (313 aa).

D69 functions as the Nucleophile in the catalytic mechanism.

This sequence belongs to the isocitrate lyase/PEP mutase superfamily. PEP mutase family.

The enzyme catalyses phosphoenolpyruvate + H(+) = 3-phosphonopyruvate. Its pathway is secondary metabolite biosynthesis; bialaphos biosynthesis. Functionally, formation of a carbon-phosphorus bond by converting phosphoenolpyruvate (PEP) to phosphonopyruvate (P-Pyr). This is Phosphoenolpyruvate phosphomutase (bcpB) from Streptomyces hygroscopicus.